The primary structure comprises 712 residues: Copper amine oxidase 1 (712 aa).

A substrate-binding site is contributed by 319 to 330 (AFDLGEYGAGYL). Residue Asp-321 is the Proton acceptor of the active site. Residues Cys-340 and Cys-366 are joined by a disulfide bond. Substrate is bound at residue 404–409 (AANYEY). Residue Tyr-407 is the Schiff-base intermediate with substrate; via topaquinone of the active site. Tyr-407 is subject to 2',4',5'-topaquinone. Cu cation contacts are provided by His-458 and His-460. Mn(2+) contacts are provided by Asp-616 and Ile-617. Residue His-627 coordinates Cu cation.

Belongs to the copper/topaquinone oxidase family. As to quaternary structure, homodimer. It depends on Cu cation as a cofactor. Requires Zn(2+) as cofactor. L-topaquinone serves as cofactor. The cofactor is Mn(2+). Post-translationally, topaquinone (TPQ) is generated by copper-dependent autoxidation of a specific tyrosyl residue.

It localises to the cytoplasm. It carries out the reaction a primary methyl amine + O2 + H2O = an aldehyde + H2O2 + NH4(+). In terms of biological role, copper amine oxidase involved in the metabolism of xenobiotic and biogenic amines. Capable of catalyzing the oxidative deamination of primary amines such as ethylamine as alternate sources of nitrogen to support growth. This Schizosaccharomyces pombe (strain 972 / ATCC 24843) (Fission yeast) protein is Copper amine oxidase 1 (cao1).